Reading from the N-terminus, the 532-residue chain is 4-amino-L-phenylalanyl-[CmlP-peptidyl-carrier-protein] 3-hydroxylase (532 aa).

Fe cation-binding residues include His-305, His-307, Asp-309, His-310, Glu-377, and Asp-403.

The protein belongs to the metallo-beta-lactamase superfamily. As to quaternary structure, homodimer. It depends on Fe(2+) as a cofactor.

The enzyme catalyses 4-amino-L-phenylalanyl-[peptidyl-carrier protein] + AH2 + O2 = (2R)-2-(4-aminophenyl)-L-seryl-[peptidyl-carrier protein] + A + H2O. It participates in antibiotic biosynthesis. Involved in chloramphenicol biosynthesis. Catalyzes the beta-hydroxylation of 4-amino-L-phenylalanine (L-PAPA) covalently bound to CmlP to form L-p-aminophenylserine. The sequence is that of 4-amino-L-phenylalanyl-[CmlP-peptidyl-carrier-protein] 3-hydroxylase from Streptomyces venezuelae (strain ATCC 10712 / CBS 650.69 / DSM 40230 / JCM 4526 / NBRC 13096 / PD 04745).